Here is a 60-residue protein sequence, read N- to C-terminus: Large ribosomal subunit protein bL32 (60 aa).

The interval 1 to 23 (MAVPKRKKSKSRRNMHRSHHAIK) is disordered.

This sequence belongs to the bacterial ribosomal protein bL32 family.

This is Large ribosomal subunit protein bL32 from Wolbachia sp. subsp. Brugia malayi (strain TRS).